The primary structure comprises 830 residues: Protein PAM1 (830 aa).

The stretch at 379–400 forms a coiled coil; it reads LQNSESTLKNEIKELQSQVLSL. Disordered stretches follow at residues 426-488, 513-558, 648-699, and 727-757; these read DNSL…ETSL, ALQQ…SQPQ, NGMN…NYNI, and SRNADSAPCVNQLNSDSPPQLQSLSQNGTSK. Polar residues predominate over residues 433–444; it reads PNSNTNGISPSD. Residues 481–514 adopt a coiled-coil conformation; that stretch reads LSRDETSLKERELEVRMKELELQERELELQRKAL. Low complexity-rich tracts occupy residues 513–527 and 538–555; these read ALQQQQQYQQRPPKQ and SGNNNNKSYNPNRKSSYS. Residues 651–699 are compositionally biased toward polar residues; it reads NGTQSRLNSLSNQSTFRSQQGPPITQQKSFQNNGGSMRTNRIPSANYNI. Phosphoserine occurs at positions 659 and 732. The segment covering 738-753 has biased composition (low complexity); it reads QLNSDSPPQLQSLSQN. Position 767 is a phosphoserine (S767). Polar residues predominate over residues 796 to 806; it reads AATANNISTMG. Positions 796-830 are disordered; it reads AATANNISTMGDESRKEDVKEKKKKKFSFFGKRKK. The segment covering 807-816 has biased composition (basic and acidic residues); the sequence is DESRKEDVKE. Positions 817–830 are enriched in basic residues; that stretch reads KKKKKFSFFGKRKK.

Belongs to the PAM1/SVL3 family.

In terms of biological role, not known. It is a suppressor of protein phosphatase 2A depletion. This is Protein PAM1 (PAM1) from Saccharomyces cerevisiae (strain ATCC 204508 / S288c) (Baker's yeast).